The chain runs to 178 residues: Large ribosomal subunit protein uL6 (178 aa).

The protein belongs to the universal ribosomal protein uL6 family. Part of the 50S ribosomal subunit.

Functionally, this protein binds to the 23S rRNA, and is important in its secondary structure. It is located near the subunit interface in the base of the L7/L12 stalk, and near the tRNA binding site of the peptidyltransferase center. The protein is Large ribosomal subunit protein uL6 of Streptococcus sanguinis (strain SK36).